Here is a 144-residue protein sequence, read N- to C-terminus: Large ribosomal subunit protein uL11 (144 aa).

It belongs to the universal ribosomal protein uL11 family. As to quaternary structure, part of the ribosomal stalk of the 50S ribosomal subunit. Interacts with L10 and the large rRNA to form the base of the stalk. L10 forms an elongated spine to which L12 dimers bind in a sequential fashion forming a multimeric L10(L12)X complex. One or more lysine residues are methylated.

Its function is as follows. Forms part of the ribosomal stalk which helps the ribosome interact with GTP-bound translation factors. The sequence is that of Large ribosomal subunit protein uL11 from Streptomyces sp. (strain FRI-5).